The following is a 266-amino-acid chain: Glucosamine-6-phosphate deaminase (266 aa).

The active-site Proton acceptor; for enolization step is the Asp-72. Residue Asp-141 is the For ring-opening step of the active site. The active-site Proton acceptor; for ring-opening step is the His-143. Glu-148 acts as the For ring-opening step in catalysis.

Belongs to the glucosamine/galactosamine-6-phosphate isomerase family. NagB subfamily. In terms of assembly, homohexamer.

The enzyme catalyses alpha-D-glucosamine 6-phosphate + H2O = beta-D-fructose 6-phosphate + NH4(+). Its pathway is amino-sugar metabolism; N-acetylneuraminate degradation; D-fructose 6-phosphate from N-acetylneuraminate: step 5/5. Its activity is regulated as follows. Allosterically activated by N-acetylglucosamine 6-phosphate (GlcNAc6P). In terms of biological role, catalyzes the reversible isomerization-deamination of glucosamine 6-phosphate (GlcN6P) to form fructose 6-phosphate (Fru6P) and ammonium ion. This is Glucosamine-6-phosphate deaminase from Aliivibrio fischeri (strain ATCC 700601 / ES114) (Vibrio fischeri).